The primary structure comprises 121 residues: MSIEVVSKAVHKNARISPLKASQVLRLLRGKPVEYAMYQLSFMNKKAAVIIKNVLKSAVANAEQKGIDPTKLVILEAKADKGIMFRKWMPRAHGRATMMRKNTSHITIALGELQEATEEAK.

The protein belongs to the universal ribosomal protein uL22 family. Part of the 50S ribosomal subunit.

Functionally, this protein binds specifically to 23S rRNA; its binding is stimulated by other ribosomal proteins, e.g. L4, L17, and L20. It is important during the early stages of 50S assembly. It makes multiple contacts with different domains of the 23S rRNA in the assembled 50S subunit and ribosome. The globular domain of the protein is located near the polypeptide exit tunnel on the outside of the subunit, while an extended beta-hairpin is found that lines the wall of the exit tunnel in the center of the 70S ribosome. The protein is Large ribosomal subunit protein uL22 of Hydrogenobaculum sp. (strain Y04AAS1).